Consider the following 591-residue polypeptide: MAASDKSVDDSLYPIAVLIDELKNEDVQLRLNSIKKLSTIALALGEERTRSELIPFLTETIYDEDEVLLALADQLGNFTSLVGGPEFAMYLIPPLESLATVEETVVRDKAVESLRTVAAEHSAQDLEIHVVPTLQRLVSGDWFTSRTSACGLFSVCYPRVTQPVKAELRANFRKLCQDETPMVRRAAANKLGEFAKVVETEYLKSDLIPNFVQLAQDDQDSVRLLAVEACVSIAQLLPQDDVEHLVLPTLRQCASDSSWRVRYMVAEKFVDLQKAVGPEITRVDLVPAFQYLLKDAEAEVRAAVATKVKDFCANLDKVNQVQIILSSILPYVRDLVSDPNPHVKSALASVIMGLSPMLGAYQTVEQLLPLFLIQLKDECPEVRLNIISNLDCVNDVIGIQQLSQSLLPAIVELAEDSKWRVRLAIIEYMPALAGQLGQEFFDQKLRGLCMGWLNDHVYAIREAATLNMKKLVEQFGAPWAEQAIIPMILVMSRNKNYLHRMTCLFCLNVLAEVCGTDITTKLLLPTVLLLAADPVANVRFNVAKTLQKISPFLEASVIDAQVKPTLDKLNTDTDVDVKHFAAQAIAGIAAA.

An N-acetylalanine modification is found at Ala2. HEAT repeat units follow at residues 10–48 (DSLY…GEER), 49–86 (TRSE…GGPE), 87–125 (FAMY…SAQD), 126–163 (LEIH…VTQP), 164–202 (VKAE…ETEY), 203–241 (LKSD…PQDD), 242–280 (VEHL…GPEI), 281–323 (TRVD…QVQI), 324–362 (ILSS…GAYQ), 363–401 (TVEQ…GIQQ), 402–440 (LSQS…GQEF), 441–479 (FDQK…GAPW), 480–518 (AEQA…GTDI), 519–557 (TTKL…EASV), and 558–591 (IDAQ…IAAA).

Belongs to the phosphatase 2A regulatory subunit A family. As to quaternary structure, PP2A exists in several trimeric forms, all of which consist of a core composed of a catalytic subunit associated with a 65 kDa regulatory subunit (PR65) (subunit A). The core complex associates with a third, variable subunit (subunit B), which confers distinct properties to the holoenzyme. Interacts with the inorganic phosphate transporter PXo (CG10483). Component of the Integrator-PP2A (INTAC) complex, composed of the Integrator core complex and protein phosphatase 2A subunits mts/PP2A and Pp2A-29B. As to expression, expression varies in tissues throughout development. Highly distributed expression in early embryos. In late embryonal development, found at high levels in nervous system and gonads. In third instar larvae, found in brain, imaginal disks and salivary glands.

It localises to the nucleus. Functionally, the PR65 subunit of protein phosphatase 2A serves as a scaffolding molecule to coordinate the assembly of the catalytic subunit and a variable regulatory B subunit. Key mediator of a quality checkpoint during transcription elongation as part of the Integrator-PP2A (INTAC) complex. The INTAC complex drives premature transcription termination of transcripts that are unfavorably configured for transcriptional elongation: within the INTAC complex, acts as a scaffolding subunit for mts/PP2A, which catalyzes dephosphorylation of the C-terminal domain (CTD) of Pol II subunit POLR2A/RPB1 and Spt5, thereby preventing transcriptional elongation. This is Serine/threonine-protein phosphatase PP2A 65 kDa regulatory subunit (Pp2A-29B) from Drosophila melanogaster (Fruit fly).